A 1358-amino-acid chain; its full sequence is DNA-directed RNA polymerase subunit beta (1358 aa).

This sequence belongs to the RNA polymerase beta chain family. In terms of assembly, the RNAP catalytic core consists of 2 alpha, 1 beta, 1 beta' and 1 omega subunit. When a sigma factor is associated with the core the holoenzyme is formed, which can initiate transcription.

It catalyses the reaction RNA(n) + a ribonucleoside 5'-triphosphate = RNA(n+1) + diphosphate. Functionally, DNA-dependent RNA polymerase catalyzes the transcription of DNA into RNA using the four ribonucleoside triphosphates as substrates. This is DNA-directed RNA polymerase subunit beta from Francisella tularensis subsp. holarctica (strain FTNF002-00 / FTA).